The chain runs to 64 residues: Large ribosomal subunit protein bL35 (64 aa).

Basic residues predominate over residues 1–26 (MPKIKTHRGAAKRFKKTGTGKIKRSK). Residues 1-48 (MPKIKTHRGAAKRFKKTGTGKIKRSKAYASHLLGGKSPKRKRNLRKAG) are disordered.

This sequence belongs to the bacterial ribosomal protein bL35 family.

The sequence is that of Large ribosomal subunit protein bL35 from Syntrophomonas wolfei subsp. wolfei (strain DSM 2245B / Goettingen).